Here is a 272-residue protein sequence, read N- to C-terminus: Shikimate dehydrogenase (NADP(+)) (272 aa).

Shikimate is bound by residues 14-16 (SKS) and Thr-61. Catalysis depends on Lys-65, which acts as the Proton acceptor. An NADP(+)-binding site is contributed by Glu-77. The shikimate site is built by Asn-86 and Asp-102. Residues 126–130 (GAGGA), 149–154 (NRTVSR), and Met-213 each bind NADP(+). Shikimate is bound at residue Tyr-215. Gly-237 contributes to the NADP(+) binding site.

Belongs to the shikimate dehydrogenase family. As to quaternary structure, homodimer.

The catalysed reaction is shikimate + NADP(+) = 3-dehydroshikimate + NADPH + H(+). Its pathway is metabolic intermediate biosynthesis; chorismate biosynthesis; chorismate from D-erythrose 4-phosphate and phosphoenolpyruvate: step 4/7. Its function is as follows. Involved in the biosynthesis of the chorismate, which leads to the biosynthesis of aromatic amino acids. Catalyzes the reversible NADPH linked reduction of 3-dehydroshikimate (DHSA) to yield shikimate (SA). This is Shikimate dehydrogenase (NADP(+)) from Escherichia coli O6:K15:H31 (strain 536 / UPEC).